Here is a 460-residue protein sequence, read N- to C-terminus: Bifunctional protein GlmU (460 aa).

The tract at residues 1–229 (MTNYAIILAA…FNESLGVNDR (229 aa)) is pyrophosphorylase. UDP-N-acetyl-alpha-D-glucosamine is bound by residues 8 to 11 (LAAG), Lys22, Gln72, and 77 to 78 (GT). Mg(2+) is bound at residue Asp102. Residues Gly139, Glu154, Asn169, and Asn227 each contribute to the UDP-N-acetyl-alpha-D-glucosamine site. Asn227 is a Mg(2+) binding site. The tract at residues 230 to 250 (VALATAETVMRQRITQKHMVN) is linker. The N-acetyltransferase stretch occupies residues 251 to 460 (GVTFQNPETV…RLAHHPSRSK (210 aa)). Arg332 and Lys350 together coordinate UDP-N-acetyl-alpha-D-glucosamine. His362 (proton acceptor) is an active-site residue. Residues Tyr365 and Asn376 each coordinate UDP-N-acetyl-alpha-D-glucosamine. Residues Ala379, 385–386 (NY), Ser404, Ala422, and Arg439 each bind acetyl-CoA.

This sequence in the N-terminal section; belongs to the N-acetylglucosamine-1-phosphate uridyltransferase family. The protein in the C-terminal section; belongs to the transferase hexapeptide repeat family. In terms of assembly, homotrimer. Mg(2+) serves as cofactor.

Its subcellular location is the cytoplasm. It carries out the reaction alpha-D-glucosamine 1-phosphate + acetyl-CoA = N-acetyl-alpha-D-glucosamine 1-phosphate + CoA + H(+). It catalyses the reaction N-acetyl-alpha-D-glucosamine 1-phosphate + UTP + H(+) = UDP-N-acetyl-alpha-D-glucosamine + diphosphate. It functions in the pathway nucleotide-sugar biosynthesis; UDP-N-acetyl-alpha-D-glucosamine biosynthesis; N-acetyl-alpha-D-glucosamine 1-phosphate from alpha-D-glucosamine 6-phosphate (route II): step 2/2. Its pathway is nucleotide-sugar biosynthesis; UDP-N-acetyl-alpha-D-glucosamine biosynthesis; UDP-N-acetyl-alpha-D-glucosamine from N-acetyl-alpha-D-glucosamine 1-phosphate: step 1/1. It participates in bacterial outer membrane biogenesis; LPS lipid A biosynthesis. Its function is as follows. Catalyzes the last two sequential reactions in the de novo biosynthetic pathway for UDP-N-acetylglucosamine (UDP-GlcNAc). The C-terminal domain catalyzes the transfer of acetyl group from acetyl coenzyme A to glucosamine-1-phosphate (GlcN-1-P) to produce N-acetylglucosamine-1-phosphate (GlcNAc-1-P), which is converted into UDP-GlcNAc by the transfer of uridine 5-monophosphate (from uridine 5-triphosphate), a reaction catalyzed by the N-terminal domain. The sequence is that of Bifunctional protein GlmU from Streptococcus pyogenes serotype M6 (strain ATCC BAA-946 / MGAS10394).